The following is a 153-amino-acid chain: Large ribosomal subunit protein bL9 (153 aa).

This sequence belongs to the bacterial ribosomal protein bL9 family.

In terms of biological role, binds to the 23S rRNA. The polypeptide is Large ribosomal subunit protein bL9 (Mycoplasma mycoides subsp. mycoides SC (strain CCUG 32753 / NCTC 10114 / PG1)).